The primary structure comprises 1213 residues: Probable ATP-binding protein BrxC (1213 aa).

It belongs to the BrxC family.

Its function is as follows. BREX systems (bacteriophage exclusion) provide immunity against bacteriophage. Part of a type 1 BREX system which protects against dsDNA phage. This system allows phage adsorption but prevents phage DNA replication, without degradation of the phage DNA. Methylation of bacterial DNA by PglX guides self/non-self discrimination. When the brxA-brxB-brxC-pglX-pglZ-brxL genes are transformed into a susceptible E.coli strain (BW25113) they confer very high resistance to infection by bacteriophage VR7 and VpaE1, about 100-fold protection against lambda, T5 and T7 and no protection against RNA phage Qbeta, ssDNA phage M13 or dSDNA phage T4 and VR5. Glycosylated phage DNA is not susceptible to BREX. The BREX system does not confer resistance to lysogenic lambda phage, i.e. prophage that are integrated into the chromosomal DNA and then induced to form phage. The protein is Probable ATP-binding protein BrxC of Escherichia coli O9:H4 (strain HS).